Reading from the N-terminus, the 102-residue chain is Mitochondrial import inner membrane translocase subunit Tim10 B (102 aa).

The Twin CX3C motif signature appears at 27–51; sequence CFQRCVPSLHHRALDAEEEACLHSC. 2 disulfides stabilise this stretch: Cys-27/Cys-51 and Cys-31/Cys-47.

Component of the TIM22 complex, which core is composed of TIMM22, associated with TIMM10 (TIMM10A and/or TIMM10B), TIMM9, AGK and TIMM29.

The protein localises to the mitochondrion inner membrane. In terms of biological role, component of the TIM22 complex, a complex that mediates the import and insertion of multi-pass transmembrane proteins into the mitochondrial inner membrane. The TIM22 complex forms a twin-pore translocase that uses the membrane potential as the external driving force. In the TIM22 complex, it may act as a docking point for the soluble 70 kDa complex that guides the target proteins in transit through the aqueous mitochondrial intermembrane space. The polypeptide is Mitochondrial import inner membrane translocase subunit Tim10 B (TIMM10B) (Pongo abelii (Sumatran orangutan)).